The chain runs to 302 residues: Vomeronasal type-1 receptor 48 (302 aa).

The Extracellular portion of the chain corresponds to 1 to 16 (MNENSRLHTHSNIRNT). The chain crosses the membrane as a helical span at residues 17-37 (FFSEIGIGISGNSFLLLFHII). Residues 38–49 (KFFRGHRPRLTD) lie on the Cytoplasmic side of the membrane. Residues 50 to 70 (LPIGLLSLIHLLMLLVAAVIA) traverse the membrane as a helical segment. At 71–91 (TDIFISWRGWNDIICKFLVYL) the chain is on the extracellular side. C85 and C172 are joined by a disulfide. Residues 92 to 114 (YRSLRGLSLCTTSMLSVLQAIIL) traverse the membrane as a helical segment. Over 115 to 131 (SPRSYCLAKFKRKSSHN) the chain is Cytoplasmic. A helical transmembrane segment spans residues 132 to 152 (ISCAIIFLSVLYMSISSHLLI). Residues 153–193 (SITATPNLTMNDFLYVSQSCSLLPLSYLMQSIYSTLLVLRE) lie on the Extracellular side of the membrane. The N-linked (GlcNAc...) asparagine glycan is linked to N159. A helical membrane pass occupies residues 194–214 (VFLIGLMVLSTSYMVALLYMH). Over 215 to 238 (RKQAQNLQGTSLSLKASAEQRATQ) the chain is Cytoplasmic. Residues 239-259 (TILMLMTFFVLMSIFDSIVSC) form a helical membrane-spanning segment. The Extracellular portion of the chain corresponds to 260–269 (SRTMFLDDPT). Residues 270 to 290 (SYSIHIFVMHIYATVSPFVFI) traverse the membrane as a helical segment. At 291 to 302 (STEKHIVNILRG) the chain is on the cytoplasmic side.

It belongs to the G-protein coupled receptor 1 family.

Its subcellular location is the cell membrane. Putative pheromone receptor implicated in the regulation of social and reproductive behavior. The sequence is that of Vomeronasal type-1 receptor 48 (Vmn1r48) from Mus musculus (Mouse).